Reading from the N-terminus, the 481-residue chain is Flavonol 3-O-glucosyltransferase UGT71C1 (481 aa).

Histidine 19 functions as the Proton acceptor in the catalytic mechanism. Histidine 19 is a binding site for an anthocyanidin. Aspartate 131 (charge relay) is an active-site residue. UDP-alpha-D-glucose is bound by residues threonine 153, alanine 352, glutamine 354, histidine 369, tryptophan 372, asparagine 373, serine 374, and glutamate 377. Alanine 392 lines the an anthocyanidin pocket. UDP-alpha-D-glucose contacts are provided by glutamate 393 and glutamine 394.

Belongs to the UDP-glycosyltransferase family.

The enzyme catalyses a flavonol + UDP-alpha-D-glucose = a flavonol 3-O-beta-D-glucoside + UDP + H(+). The catalysed reaction is a 7-O-hydroxy-flavonol + UDP-alpha-D-glucose = a flavonol 7-O-beta-D-glucoside + UDP + H(+). Possesses quercetin 7-O-glucosyltransferase and 3'-O-glucosyltransferase activities in vitro. Also active in vitro on benzoates and benzoate derivatives. Glucosylates other secondary metabolites in vitro like trans-resveratrol, curcumin, vanillin and etoposide. This chain is Flavonol 3-O-glucosyltransferase UGT71C1, found in Arabidopsis thaliana (Mouse-ear cress).